Consider the following 470-residue polypeptide: Glutathione reductase (470 aa).

Residues S16 and G17 each coordinate FAD. Position 16 (S16) interacts with glutathione. R23 is a glutathione binding site. Residues E36, T43, C44, and K52 each coordinate FAD. Residues C44 and C49 are joined by a disulfide bond. Y104 is a glutathione binding site. Residue A120 coordinates FAD. Positions 190, 193, 196, 213, and 219 each coordinate NADP(+). T228 provides a ligand contact to glutathione. G280 contacts NADP(+). FAD is bound at residue D321. Position 327 (E327) interacts with NADP(+). T329 lines the FAD pocket. R337 contributes to the glutathione binding site. Position 362 (A362) interacts with NADP(+). K412 contacts glutathione. H459 is an FAD binding site. H459 serves as the catalytic Proton acceptor.

Belongs to the class-I pyridine nucleotide-disulfide oxidoreductase family. In terms of assembly, homodimer. The cofactor is FAD.

It is found in the cytoplasm. The protein localises to the mitochondrion. It catalyses the reaction 2 glutathione + NADP(+) = glutathione disulfide + NADPH + H(+). Catalyzes the reduction of glutathione disulfide (GSSG) to reduced glutathione (GSH). Constitutes the major mechanism to maintain a high GSH:GSSG ratio in the cytosol. The sequence is that of Glutathione reductase (GLR1) from Yarrowia lipolytica (strain CLIB 122 / E 150) (Yeast).